The chain runs to 184 residues: Putative YfeABCD regulator YfeE (184 aa).

3 consecutive transmembrane segments (helical) span residues 15-35 (IAGW…IINF), 84-104 (LSAG…GLSL), and 162-182 (ILPS…GIMI).

This sequence to E.coli YniB.

The protein resides in the cell membrane. Putative regulator of YfeABCD, an ABC transporter locus involved in inorganic iron transport. The sequence is that of Putative YfeABCD regulator YfeE (yfeE) from Yersinia pestis.